Consider the following 392-residue polypeptide: uncharacterized protein (392 aa).

The N-terminal 34 residues, 1–34 (MCISSSSLLCGINSLKYASNRVGILIPPFQTASS), are a transit peptide targeting the mitochondrion. The next 8 membrane-spanning stretches (helical) occupy residues 115–135 (VAIM…WHWD), 150–172 (FRFM…WWTL), 185–205 (LLVN…KFGV), 208–225 (ALSV…VALQ), 277–297 (ATFV…AVYA), 299–319 (AAIF…VYPV), 321–341 (AGIF…LNYE), and 350–370 (AHVS…PAMW). The active-site Nucleophile is the Ser292. The active site involves His351.

The protein belongs to the peptidase S54 family.

The protein resides in the mitochondrion inner membrane. This is an uncharacterized protein from Schizosaccharomyces pombe (strain 972 / ATCC 24843) (Fission yeast).